A 510-amino-acid polypeptide reads, in one-letter code: NAD(P)H-quinone oxidoreductase subunit 2 A, chloroplastic (510 aa).

Helical transmembrane passes span 24 to 44, 57 to 77, 99 to 119, 124 to 144, 149 to 169, 183 to 203, 227 to 247, 295 to 315, 323 to 343, 354 to 374, 395 to 415, 418 to 438, and 482 to 502; these read LLLFDGSFIFPECILIFGLIL, MPWLYFISSTSLVMSITALLF, IFQFLILLCSTLCIPLSVEYI, MAITEFLLFVLTATLGGMFLC, LITIFVAPECFSLCSYLLSGY, YLLMGGASSSILVHGFSWLYG, PGISIALIFITVGIGFKLSPA, WHLLLEILAILSMIVGNLIAI, MLAYSSIGQIGYVIIGIIVGD, YMLFYISMNLGTFACIVLFGL, ALSLALCLLSLGGLPPLAGFF, LHLFWCGWQAGLYFLVSIGLL, and LSMIVCVIASTIPGISMSPII.

This sequence belongs to the complex I subunit 2 family. NDH is composed of at least 16 different subunits, 5 of which are encoded in the nucleus.

The protein localises to the plastid. It localises to the chloroplast thylakoid membrane. It catalyses the reaction a plastoquinone + NADH + (n+1) H(+)(in) = a plastoquinol + NAD(+) + n H(+)(out). It carries out the reaction a plastoquinone + NADPH + (n+1) H(+)(in) = a plastoquinol + NADP(+) + n H(+)(out). Its function is as follows. NDH shuttles electrons from NAD(P)H:plastoquinone, via FMN and iron-sulfur (Fe-S) centers, to quinones in the photosynthetic chain and possibly in a chloroplast respiratory chain. The immediate electron acceptor for the enzyme in this species is believed to be plastoquinone. Couples the redox reaction to proton translocation, and thus conserves the redox energy in a proton gradient. This chain is NAD(P)H-quinone oxidoreductase subunit 2 A, chloroplastic, found in Populus trichocarpa (Western balsam poplar).